We begin with the raw amino-acid sequence, 567 residues long: Oxygen-dependent choline dehydrogenase (567 aa).

4 to 33 (DYIIIGAGSAGNVLAARLTEDADVTVLLLE) is an FAD binding site. The active-site Proton acceptor is His473.

Belongs to the GMC oxidoreductase family. FAD serves as cofactor.

The enzyme catalyses choline + A = betaine aldehyde + AH2. The catalysed reaction is betaine aldehyde + NAD(+) + H2O = glycine betaine + NADH + 2 H(+). Its pathway is amine and polyamine biosynthesis; betaine biosynthesis via choline pathway; betaine aldehyde from choline (cytochrome c reductase route): step 1/1. Its function is as follows. Involved in the biosynthesis of the osmoprotectant glycine betaine. Catalyzes the oxidation of choline to betaine aldehyde and betaine aldehyde to glycine betaine at the same rate. This is Oxygen-dependent choline dehydrogenase from Yersinia pseudotuberculosis serotype O:1b (strain IP 31758).